Reading from the N-terminus, the 391-residue chain is Multidrug resistance protein MdtL (391 aa).

12 helical membrane passes run 4–24 (FLICSFALVLLYPAGIDMYLV), 42–62 (IAFSVYLAGMAAAMLFAGKVA), 69–89 (PVAIPGAALFIIASVFCSLAE), 93–113 (LFLAGRFLQGLGAGCCYVVAF), 131–151 (LLNGITCIIPVLAPVLGHLIM), 158–178 (SLFWTMATMGIAVLMLSLFIL), 203–222 (FFLSRVVITTLSVSVILTFV), 245–265 (ALTAGVSMTVSFSTPFALGIF), 269–289 (TLMITSQVLFLAAGITLAVSP), 293–313 (VSLFGITLICAGFSVGFGVAM), 331–351 (LGIAQVCGSSLWIWLAAVVGI), and 356–376 (MLIGILIACSIVSLLLIMFVA).

It belongs to the major facilitator superfamily. DHA1 family. MdtL (TC 2.A.1.2.22) subfamily.

Its subcellular location is the cell inner membrane. Functionally, confers resistance to chloramphenicol. This chain is Multidrug resistance protein MdtL, found in Escherichia coli (strain SMS-3-5 / SECEC).